The following is a 529-amino-acid chain: uncharacterized protein (529 aa).

Residues 157 to 410 (DFPHIICEIE…FKNRVRENID (254 aa)) form the Radical SAM core domain. Cysteine 171, cysteine 176, and cysteine 179 together coordinate [4Fe-4S] cluster.

It depends on [4Fe-4S] cluster as a cofactor.

This is an uncharacterized protein from Archaeoglobus fulgidus (strain ATCC 49558 / DSM 4304 / JCM 9628 / NBRC 100126 / VC-16).